A 193-amino-acid chain; its full sequence is Partner of Y14 and mago (193 aa).

Disordered stretches follow at residues 1–27 (MSTPTAYEHDADGSKFIPATQRPDGTW) and 118–142 (IQEPTLPSQSVPTESISQSDPTKRL). Residues 122-137 (TLPSQSVPTESISQSD) are compositionally biased toward polar residues. Positions 139-192 (TKRLKNLRKKLREIEFLEEKIKAGLLKSPDKDQKEKMSKKNEILNEIDILKNSI) form a coiled coil.

The protein belongs to the pym family. As to quaternary structure, interacts (via N-terminus) with mago and tsu/Y14; the interaction is direct.

It localises to the cytoplasm. Its subcellular location is the nucleus. Functionally, regulator of the exon junction complex (EJC), a multiprotein complex that associates immediately upstream of the exon-exon junction on mRNAs and serves as a positional landmarks for the intron exon structure of genes and directs post-transcriptional processes in the cytoplasm such as mRNA export, nonsense-mediated mRNA decay (NMD) or translation. In Bombyx mori (Silk moth), this protein is Partner of Y14 and mago.